A 513-amino-acid chain; its full sequence is ATP synthase subunit alpha (513 aa).

ATP is bound at residue 169–176 (GDRQTGKS).

It belongs to the ATPase alpha/beta chains family. F-type ATPases have 2 components, CF(1) - the catalytic core - and CF(0) - the membrane proton channel. CF(1) has five subunits: alpha(3), beta(3), gamma(1), delta(1), epsilon(1). CF(0) has three main subunits: a(1), b(2) and c(9-12). The alpha and beta chains form an alternating ring which encloses part of the gamma chain. CF(1) is attached to CF(0) by a central stalk formed by the gamma and epsilon chains, while a peripheral stalk is formed by the delta and b chains.

The protein localises to the cell inner membrane. It catalyses the reaction ATP + H2O + 4 H(+)(in) = ADP + phosphate + 5 H(+)(out). In terms of biological role, produces ATP from ADP in the presence of a proton gradient across the membrane. The alpha chain is a regulatory subunit. The polypeptide is ATP synthase subunit alpha (Blochmanniella floridana).